Reading from the N-terminus, the 707-residue chain is Transcription termination factor Rho (707 aa).

Disordered stretches follow at residues 1-38 (MSDT…RRGT) and 76-321 (QAAG…DEIQ). 2 stretches are compositionally biased toward low complexity: residues 16–31 (AAAP…TGAG) and 76–93 (QAAG…ADTA). The segment covering 107–132 (RTGDEAPAEKAEKAGKADKKADKAAA) has biased composition (basic and acidic residues). A compositionally biased stretch (low complexity) spans 153–163 (ASAEQAAPADD). The segment covering 176 to 188 (DAGSPSATDTTVA) has biased composition (polar residues). The span at 203–213 (QQSQGHQQGQG) shows a compositional bias: low complexity. Positions 215–265 (ARSDAEGGDGRRRDRRDRGDRDRGDRGDRGDRGDRGDRGERGRDRRNKGDD) are enriched in basic and acidic residues. Residues 301 to 315 (RRGRRGRYRDRRGRR) show a composition bias toward basic residues. In terms of domain architecture, Rho RNA-BD spans 331–406 (LIPVAGILDI…VRLDSVNGMA (76 aa)). Residues 449-454 (GKGQRG), 461-466 (KTGKTM), and Arg492 each bind ATP.

This sequence belongs to the Rho family. Homohexamer. The homohexamer assembles into an open ring structure.

Its function is as follows. Facilitates transcription termination by a mechanism that involves Rho binding to the nascent RNA, activation of Rho's RNA-dependent ATPase activity, and release of the mRNA from the DNA template. The sequence is that of Transcription termination factor Rho from Streptomyces lividans.